Consider the following 292-residue polypeptide: 11-beta-hydroxysteroid dehydrogenase 1 (292 aa).

A helical membrane pass occupies residues 7 to 24 (YLLPILGIFLAYYYYSAN).

This sequence belongs to the short-chain dehydrogenases/reductases (SDR) family. As to quaternary structure, homodimer. In terms of tissue distribution, expressed highest in liver and ovaries (corpora lutea, granulosa cells, thecal, uterine caruncle and intercarunculer tissues), lower expression in kidney and spleen, and lowest in the adrenal.

The protein resides in the endoplasmic reticulum membrane. The catalysed reaction is an 11beta-hydroxysteroid + NADP(+) = an 11-oxosteroid + NADPH + H(+). It carries out the reaction corticosterone + NADP(+) = 11-dehydrocorticosterone + NADPH + H(+). The enzyme catalyses cortisone + NADPH + H(+) = cortisol + NADP(+). It catalyses the reaction a 7beta-hydroxysteroid + NADP(+) = a 7-oxosteroid + NADPH + H(+). The catalysed reaction is 7-oxocholesterol + NADPH + H(+) = 7beta-hydroxycholesterol + NADP(+). It carries out the reaction chenodeoxycholate + NADP(+) = 7-oxolithocholate + NADPH + H(+). The enzyme catalyses 7-oxolithocholate + NADPH + H(+) = ursodeoxycholate + NADP(+). It catalyses the reaction glycochenodeoxycholate + NADP(+) = 7-oxoglycolithocholate + NADPH + H(+). The catalysed reaction is taurochenodeoxycholate + NADP(+) = 7-oxotaurolithocholate + NADPH + H(+). It carries out the reaction tauroursodeoxycholate + NADP(+) = 7-oxotaurolithocholate + NADPH + H(+). The enzyme catalyses glycoursodeoxycholate + NADP(+) = 7-oxoglycolithocholate + NADPH + H(+). It catalyses the reaction 7-oxopregnenolone + NADPH + H(+) = 7beta-hydroxypregnenolone + NADP(+). The catalysed reaction is 3beta,7alpha-dihydroxyandrost-5-en-17-one + NADP(+) = 3beta-hydroxy-5-androstene-7,17-dione + NADPH + H(+). It carries out the reaction 3beta-hydroxy-5-androstene-7,17-dione + NADPH + H(+) = 3beta,7beta-dihydroxyandrost-5-en-17-one + NADP(+). The enzyme catalyses 3beta-hydroxy-5alpha-androstane-7,17-dione + NADPH + H(+) = 3beta,7beta-dihydroxy-5alpha-androstan-17-one + NADP(+). In terms of biological role, controls the reversible conversion of biologically active glucocorticoids such as cortisone to cortisol, and 11-dehydrocorticosterone to corticosterone in the presence of NADP(H). Participates in the corticosteroid receptor-mediated anti-inflammatory response, as well as metabolic and homeostatic processes. Plays a role in the secretion of aqueous humor in the eye, maintaining a normotensive, intraocular environment. Bidirectional in vitro, predominantly functions as a reductase in vivo, thereby increasing the concentration of active glucocorticoids. It has broad substrate specificity, besides glucocorticoids, it accepts other steroid and sterol substrates. Interconverts 7-oxo- and 7-hydroxy-neurosteroids such as 7-oxopregnenolone and 7beta-hydroxypregnenolone, 7-oxodehydroepiandrosterone (3beta-hydroxy-5-androstene-7,17-dione) and 7beta-hydroxydehydroepiandrosterone (3beta,7beta-dihydroxyandrost-5-en-17-one), among others. Catalyzes the stereo-specific conversion of the major dietary oxysterol, 7-ketocholesterol (7-oxocholesterol), into the more polar 7-beta-hydroxycholesterol metabolite. 7-oxocholesterol is one of the most important oxysterols, it participates in several events such as induction of apoptosis, accumulation in atherosclerotic lesions, lipid peroxidation, and induction of foam cell formation. Mediates the 7-oxo reduction of 7-oxolithocholate mainly to chenodeoxycholate, and to a lesser extent to ursodeoxycholate, both in its free form and when conjugated to glycine or taurine, providing a link between glucocorticoid activation and bile acid metabolism. Catalyzes the synthesis of 7-beta-25-dihydroxycholesterol from 7-oxo-25-hydroxycholesterol in vitro, which acts as a ligand for the G-protein-coupled receptor (GPCR) Epstein-Barr virus-induced gene 2 (EBI2) and may thereby regulate immune cell migration. The chain is 11-beta-hydroxysteroid dehydrogenase 1 from Bos taurus (Bovine).